A 183-amino-acid polypeptide reads, in one-letter code: Ribosome rescue factor SmrB (183 aa).

Positions 98–173 constitute a Smr domain; sequence LDLHGLTQQQ…GDAALLVLIE (76 aa).

It belongs to the SmrB family. In terms of assembly, associates with collided ribosomes, but not with correctly translating polysomes.

Functionally, acts as a ribosome collision sensor. Detects stalled/collided disomes (pairs of ribosomes where the leading ribosome is stalled and a second ribosome has collided with it) and endonucleolytically cleaves mRNA at the 5' boundary of the stalled ribosome. Stalled/collided disomes form a new interface (primarily via the 30S subunits) that binds SmrB. Cleaved mRNA becomes available for tmRNA ligation, leading to ribosomal subunit dissociation and rescue of stalled ribosomes. The sequence is that of Ribosome rescue factor SmrB from Klebsiella pneumoniae (strain 342).